The chain runs to 393 residues: Ubiquitin-like modifier-activating enzyme 5 (393 aa).

ATP is bound by residues glycine 75, aspartate 96, lysine 119, asparagine 142, and asparagine 175. Zn(2+) is bound by residues cysteine 217 and cysteine 220. Cysteine 241 acts as the Glycyl thioester intermediate in catalysis. Cysteine 294 and cysteine 299 together coordinate Zn(2+).

It belongs to the ubiquitin-activating E1 family. UBA5 subfamily.

E1-like enzyme which activates UFM1. The chain is Ubiquitin-like modifier-activating enzyme 5 from Bombyx mori (Silk moth).